Reading from the N-terminus, the 87-residue chain is Large ribosomal subunit protein bL28 (87 aa).

This sequence belongs to the bacterial ribosomal protein bL28 family.

This Akkermansia muciniphila (strain ATCC BAA-835 / DSM 22959 / JCM 33894 / BCRC 81048 / CCUG 64013 / CIP 107961 / Muc) protein is Large ribosomal subunit protein bL28.